The primary structure comprises 543 residues: CTP synthase (543 aa).

The tract at residues 1–265 (MTRFVFITGG…DTEVLRHFGL (265 aa)) is amidoligase domain. Position 13 (Ser-13) interacts with CTP. Ser-13 lines the UTP pocket. 14–19 (SLGKGI) provides a ligand contact to ATP. Tyr-54 is a binding site for L-glutamine. Asp-71 provides a ligand contact to ATP. Residues Asp-71 and Glu-139 each coordinate Mg(2+). CTP contacts are provided by residues 146-148 (DIE), 186-191 (KTKPTQ), and Lys-222. Residues 186–191 (KTKPTQ) and Lys-222 each bind UTP. The Glutamine amidotransferase type-1 domain maps to 291-542 (RIAVVGKYTA…VGAAVKKMRL (252 aa)). An L-glutamine-binding site is contributed by Gly-354. Catalysis depends on Cys-381, which acts as the Nucleophile; for glutamine hydrolysis. L-glutamine is bound by residues 382 to 385 (FGMQ), Glu-405, and Arg-470. Residues His-515 and Glu-517 contribute to the active site.

Belongs to the CTP synthase family. As to quaternary structure, homotetramer.

The catalysed reaction is UTP + L-glutamine + ATP + H2O = CTP + L-glutamate + ADP + phosphate + 2 H(+). The enzyme catalyses L-glutamine + H2O = L-glutamate + NH4(+). It catalyses the reaction UTP + NH4(+) + ATP = CTP + ADP + phosphate + 2 H(+). It functions in the pathway pyrimidine metabolism; CTP biosynthesis via de novo pathway; CTP from UDP: step 2/2. Its activity is regulated as follows. Allosterically activated by GTP, when glutamine is the substrate; GTP has no effect on the reaction when ammonia is the substrate. The allosteric effector GTP functions by stabilizing the protein conformation that binds the tetrahedral intermediate(s) formed during glutamine hydrolysis. Inhibited by the product CTP, via allosteric rather than competitive inhibition. Its function is as follows. Catalyzes the ATP-dependent amination of UTP to CTP with either L-glutamine or ammonia as the source of nitrogen. Regulates intracellular CTP levels through interactions with the four ribonucleotide triphosphates. The sequence is that of CTP synthase from Gluconacetobacter diazotrophicus (strain ATCC 49037 / DSM 5601 / CCUG 37298 / CIP 103539 / LMG 7603 / PAl5).